Consider the following 250-residue polypeptide: Putative ankyrin repeat protein RBE_0623 (250 aa).

ANK repeat units lie at residues 70–99 (IGDSLPLVAVKNNNLDMLKMLLSCGFEPNT), 104–134 (NCYTPLWYVTYKGYTNSVRKLLEYPINNINE), and 137–166 (GKETPLKSALIHKHTEIAKLLIDKINPDKF).

The chain is Putative ankyrin repeat protein RBE_0623 from Rickettsia bellii (strain RML369-C).